A 124-amino-acid chain; its full sequence is Small ribosomal subunit protein uS12 (124 aa).

It belongs to the universal ribosomal protein uS12 family. As to quaternary structure, part of the 30S ribosomal subunit. Contacts proteins S8 and S17. May interact with IF1 in the 30S initiation complex.

With S4 and S5 plays an important role in translational accuracy. Functionally, interacts with and stabilizes bases of the 16S rRNA that are involved in tRNA selection in the A site and with the mRNA backbone. Located at the interface of the 30S and 50S subunits, it traverses the body of the 30S subunit contacting proteins on the other side and probably holding the rRNA structure together. The combined cluster of proteins S8, S12 and S17 appears to hold together the shoulder and platform of the 30S subunit. The sequence is that of Small ribosomal subunit protein uS12 from Photorhabdus laumondii subsp. laumondii (strain DSM 15139 / CIP 105565 / TT01) (Photorhabdus luminescens subsp. laumondii).